Reading from the N-terminus, the 613-residue chain is Dihydroxy-acid dehydratase (613 aa).

Asp-81 lines the Mg(2+) pocket. Cys-122 lines the [2Fe-2S] cluster pocket. Asp-123 and Lys-124 together coordinate Mg(2+). Lys-124 is subject to N6-carboxylysine. A [2Fe-2S] cluster-binding site is contributed by Cys-195. Glu-491 is a binding site for Mg(2+). The active-site Proton acceptor is the Ser-517.

Belongs to the IlvD/Edd family. Homodimer. [2Fe-2S] cluster serves as cofactor. The cofactor is Mg(2+).

It catalyses the reaction (2R)-2,3-dihydroxy-3-methylbutanoate = 3-methyl-2-oxobutanoate + H2O. The enzyme catalyses (2R,3R)-2,3-dihydroxy-3-methylpentanoate = (S)-3-methyl-2-oxopentanoate + H2O. The protein operates within amino-acid biosynthesis; L-isoleucine biosynthesis; L-isoleucine from 2-oxobutanoate: step 3/4. Its pathway is amino-acid biosynthesis; L-valine biosynthesis; L-valine from pyruvate: step 3/4. Functions in the biosynthesis of branched-chain amino acids. Catalyzes the dehydration of (2R,3R)-2,3-dihydroxy-3-methylpentanoate (2,3-dihydroxy-3-methylvalerate) into 2-oxo-3-methylpentanoate (2-oxo-3-methylvalerate) and of (2R)-2,3-dihydroxy-3-methylbutanoate (2,3-dihydroxyisovalerate) into 2-oxo-3-methylbutanoate (2-oxoisovalerate), the penultimate precursor to L-isoleucine and L-valine, respectively. The sequence is that of Dihydroxy-acid dehydratase from Vibrio cholerae serotype O1 (strain ATCC 39541 / Classical Ogawa 395 / O395).